A 653-amino-acid polypeptide reads, in one-letter code: tRNA-guanine(15) transglycosylase (653 aa).

Asp91 functions as the Nucleophile in the catalytic mechanism. Positions 126 and 193 each coordinate substrate. Zn(2+) is bound by residues Cys276, Cys278, and Cys281. The PUA domain maps to 578-653 (AWRVAVNEES…QAVKTRKGGF (76 aa)).

It belongs to the archaeosine tRNA-ribosyltransferase family. It depends on Zn(2+) as a cofactor.

The catalysed reaction is guanosine(15) in tRNA + 7-cyano-7-deazaguanine = 7-cyano-7-carbaguanosine(15) in tRNA + guanine. The protein operates within tRNA modification; archaeosine-tRNA biosynthesis. In terms of biological role, exchanges the guanine residue with 7-cyano-7-deazaguanine (preQ0) at position 15 in the dihydrouridine loop (D-loop) of archaeal tRNAs. In Methanothermobacter thermautotrophicus (strain ATCC 29096 / DSM 1053 / JCM 10044 / NBRC 100330 / Delta H) (Methanobacterium thermoautotrophicum), this protein is tRNA-guanine(15) transglycosylase.